The primary structure comprises 610 residues: Elongation factor 4 (610 aa).

Residues 7-189 (SRIRNFSIIA…AIVQRIPPPK (183 aa)) form the tr-type G domain. Residues 19–24 (DHGKST) and 136–139 (NKID) contribute to the GTP site.

Belongs to the TRAFAC class translation factor GTPase superfamily. Classic translation factor GTPase family. LepA subfamily.

The protein resides in the cell inner membrane. It carries out the reaction GTP + H2O = GDP + phosphate + H(+). Functionally, required for accurate and efficient protein synthesis under certain stress conditions. May act as a fidelity factor of the translation reaction, by catalyzing a one-codon backward translocation of tRNAs on improperly translocated ribosomes. Back-translocation proceeds from a post-translocation (POST) complex to a pre-translocation (PRE) complex, thus giving elongation factor G a second chance to translocate the tRNAs correctly. Binds to ribosomes in a GTP-dependent manner. In Thermus thermophilus (strain ATCC BAA-163 / DSM 7039 / HB27), this protein is Elongation factor 4.